A 103-amino-acid chain; its full sequence is Large ribosomal subunit protein bL21 (103 aa).

Belongs to the bacterial ribosomal protein bL21 family. As to quaternary structure, part of the 50S ribosomal subunit. Contacts protein L20.

This protein binds to 23S rRNA in the presence of protein L20. The polypeptide is Large ribosomal subunit protein bL21 (Desulfotalea psychrophila (strain LSv54 / DSM 12343)).